Here is a 231-residue protein sequence, read N- to C-terminus: uncharacterized protein (231 aa).

6 helical membrane-spanning segments follow: residues 4 to 24 (YIIYLYTFLTIFGFWLALQIS), 29 to 49 (SMIFNTFVLTVLILAAILVIG), 58 to 78 (AGNAPINNLLGLSIVALALPL), 95 to 115 (TVVIASFLAMLSGGLLALLLG), 147 to 167 (VTAVGVVVAGLQGSIFGYLVL), and 211 to 231 (LCGIISSILAPFVFKLIYFFV).

Belongs to the YohK (E.coli)/YwbG (IPA-22R) (B.subtilis) family.

Its subcellular location is the cell membrane. This is an uncharacterized protein from Haemophilus influenzae (strain ATCC 51907 / DSM 11121 / KW20 / Rd).